The primary structure comprises 255 residues: Octanoyltransferase (255 aa).

The 185-residue stretch at 54 to 238 folds into the BPL/LPL catalytic domain; that stretch reads GDANELVWLL…SFTTIFGATV (185 aa). Residues 92 to 99, 167 to 169, and 180 to 182 contribute to the substrate site; these read RGGQLTYH, AIG, and GIA. Cysteine 198 (acyl-thioester intermediate) is an active-site residue.

It belongs to the LipB family.

It is found in the cytoplasm. It carries out the reaction octanoyl-[ACP] + L-lysyl-[protein] = N(6)-octanoyl-L-lysyl-[protein] + holo-[ACP] + H(+). The protein operates within protein modification; protein lipoylation via endogenous pathway; protein N(6)-(lipoyl)lysine from octanoyl-[acyl-carrier-protein]: step 1/2. In terms of biological role, catalyzes the transfer of endogenously produced octanoic acid from octanoyl-acyl-carrier-protein onto the lipoyl domains of lipoate-dependent enzymes. Lipoyl-ACP can also act as a substrate although octanoyl-ACP is likely to be the physiological substrate. The chain is Octanoyltransferase from Rhodopseudomonas palustris (strain BisB5).